Reading from the N-terminus, the 257-residue chain is Probable septum site-determining protein MinC (257 aa).

This sequence belongs to the MinC family. Interacts with MinD and FtsZ.

Its function is as follows. Cell division inhibitor that blocks the formation of polar Z ring septums. Rapidly oscillates between the poles of the cell to destabilize FtsZ filaments that have formed before they mature into polar Z rings. Prevents FtsZ polymerization. This chain is Probable septum site-determining protein MinC, found in Burkholderia lata (strain ATCC 17760 / DSM 23089 / LMG 22485 / NCIMB 9086 / R18194 / 383).